The chain runs to 218 residues: Putative copper transporter crmD (218 aa).

Transmembrane regions (helical) follow at residues 37–57 (YSLT…LGVL) and 176–196 (MLAV…GIVV).

This sequence belongs to the copper transporter (Ctr) (TC 1.A.56) family. SLC31A subfamily.

The protein localises to the membrane. It carries out the reaction Cu(2+)(in) = Cu(2+)(out). In terms of biological role, putative copper transporter; part of the crm gene cluster that mediates the biosynthesis of a yet unidentified copper-responsive metabolite. Probably involved in the transport of copper, even if it does not act as a major copper transporter. In contrast to crmA, is not involved in the biosynthesis of fumivalines or fumicicolins. The polypeptide is Putative copper transporter crmD (Aspergillus fumigatus (strain ATCC MYA-4609 / CBS 101355 / FGSC A1100 / Af293) (Neosartorya fumigata)).